The sequence spans 490 residues: MWWRRSRTNSLRYTVHPFASLQRSMIAPMDWTTIDACRTSTELPRPVEIRGWIRTRRDSKGGFSFLEVNDGTSLGNLQVVAPAELENYAEEIQKLTAGCSVVVQGELVESPAKGQSTELHASSVRVIGWCDGETYPLQKKRHSFEKLREWSHLRARTNTLGAVMRVRNRISQSIHRFFDDEGFNYLHTPIITASDCEGAGEMFRVTTLNLEKLAGSNRPFDTKQDFFQKPTHLTVSGQLEAETYATALSRVYTFGPTFRAENSNTSRHLAEFWMVEPEAAFYDLNDNMQLAERFLKRVFSDCLSHCGEDMDFFNERIEKGKIDQLKSVIEKPFEHMTYTDAVERLLACDEKFEYPVNWGTDLQAEHERYLTSVVGGPVILTDYPSSIKPFYMRVSDDGKTVAAMDVLVPGVGEIIGGSQREERLDVLQRRMAEGGLDESEYWWYVDLRRYGTVPHAGFGLGLERAVQYVTGMANIRDVIPFPRTPGNAEF.

The protein belongs to the class-II aminoacyl-tRNA synthetase family. Homodimer.

It is found in the cytoplasm. The enzyme catalyses tRNA(Asn) + L-asparagine + ATP = L-asparaginyl-tRNA(Asn) + AMP + diphosphate + H(+). The protein is Asparagine--tRNA ligase of Rhodopirellula baltica (strain DSM 10527 / NCIMB 13988 / SH1).